Consider the following 148-residue polypeptide: NADH-quinone oxidoreductase subunit C (148 aa).

This sequence belongs to the complex I 30 kDa subunit family. NDH-1 is composed of 14 different subunits. Subunits NuoB, C, D, E, F, and G constitute the peripheral sector of the complex.

It localises to the cell membrane. The enzyme catalyses a quinone + NADH + 5 H(+)(in) = a quinol + NAD(+) + 4 H(+)(out). In terms of biological role, NDH-1 shuttles electrons from NADH, via FMN and iron-sulfur (Fe-S) centers, to quinones in the respiratory chain. The immediate electron acceptor for the enzyme in this species is believed to be a menaquinone. Couples the redox reaction to proton translocation (for every two electrons transferred, four hydrogen ions are translocated across the cytoplasmic membrane), and thus conserves the redox energy in a proton gradient. This Moorella thermoacetica (strain ATCC 39073 / JCM 9320) protein is NADH-quinone oxidoreductase subunit C.